Here is a 314-residue protein sequence, read N- to C-terminus: Vomeronasal type-1 receptor 95 (314 aa).

Over 1–18 (MNKDNTLYCSAYRIAFFS) the chain is Extracellular. The helical transmembrane segment at 19–39 (EIGIGISANSCLLLFHTFMFI) threads the bilayer. At 40–48 (RGHRPRLTD) the chain is on the cytoplasmic side. The chain crosses the membrane as a helical span at residues 49 to 69 (LPIGLVALIHLVMLLLAAYIT). At 70-88 (EDFFMSSGGWDDITCKLFI) the chain is on the extracellular side. Cysteine 84 and cysteine 171 are joined by a disulfide. The helical transmembrane segment at 89–113 (FLHRFFRSLSVCDTCMLSVFQAIIL) threads the bilayer. Residues 114-133 (CPQSSHLAKFKLNSPHHLSC) are Cytoplasmic-facing. The chain crosses the membrane as a helical span at residues 134–154 (FFIFMSIFYTSISSHILIAAI). Residues 155-186 (ATQNLTSVNLIYITKSCSFLPMSSSMQRTFST) lie on the Extracellular side of the membrane. Asparagine 158 carries N-linked (GlcNAc...) asparagine glycosylation. Residues 187–207 (LLAFRNVFLIGLMGLSTCYMA) traverse the membrane as a helical segment. At 208–235 (TLLCRHKTRSQQLQNSKLSPKATPEQRA) the chain is on the cytoplasmic side. A helical membrane pass occupies residues 236 to 256 (IWTILMLMSFFLIISTFDSIM). Residues 257 to 268 (TYSRTIFQGNQS) lie on the Extracellular side of the membrane. N-linked (GlcNAc...) asparagine glycosylation is present at asparagine 266. A helical transmembrane segment spans residues 269-289 (LYCVQIPVAHGYAAFSPLLVL). Over 290-314 (NNEKRLTSLMISMYDRIVRLESLCS) the chain is Cytoplasmic.

The protein belongs to the G-protein coupled receptor 1 family.

The protein resides in the cell membrane. Putative pheromone receptor implicated in the regulation of social as well as reproductive behavior. The protein is Vomeronasal type-1 receptor 95 (Vom1r95) of Rattus norvegicus (Rat).